Reading from the N-terminus, the 110-residue chain is Phosphoribosyl-ATP pyrophosphatase (110 aa).

It belongs to the PRA-PH family.

It is found in the cytoplasm. It carries out the reaction 1-(5-phospho-beta-D-ribosyl)-ATP + H2O = 1-(5-phospho-beta-D-ribosyl)-5'-AMP + diphosphate + H(+). It participates in amino-acid biosynthesis; L-histidine biosynthesis; L-histidine from 5-phospho-alpha-D-ribose 1-diphosphate: step 2/9. The chain is Phosphoribosyl-ATP pyrophosphatase from Stutzerimonas stutzeri (strain A1501) (Pseudomonas stutzeri).